A 482-amino-acid polypeptide reads, in one-letter code: UDP-N-acetylmuramoyl-L-alanyl-D-glutamate--2,6-diaminopimelate ligase (482 aa).

S30 is a binding site for UDP-N-acetyl-alpha-D-muramoyl-L-alanyl-D-glutamate. 111–117 (GTNGKTT) contributes to the ATP binding site. Residues 153-154 (TT), S180, Q186, and R188 contribute to the UDP-N-acetyl-alpha-D-muramoyl-L-alanyl-D-glutamate site. The residue at position 220 (K220) is an N6-carboxylysine. Meso-2,6-diaminopimelate is bound by residues R378, 402–405 (DNPR), G455, and E459. The Meso-diaminopimelate recognition motif signature appears at 402-405 (DNPR).

The protein belongs to the MurCDEF family. MurE subfamily. Mg(2+) is required as a cofactor. Carboxylation is probably crucial for Mg(2+) binding and, consequently, for the gamma-phosphate positioning of ATP.

Its subcellular location is the cytoplasm. The enzyme catalyses UDP-N-acetyl-alpha-D-muramoyl-L-alanyl-D-glutamate + meso-2,6-diaminopimelate + ATP = UDP-N-acetyl-alpha-D-muramoyl-L-alanyl-gamma-D-glutamyl-meso-2,6-diaminopimelate + ADP + phosphate + H(+). Its pathway is cell wall biogenesis; peptidoglycan biosynthesis. Its function is as follows. Catalyzes the addition of meso-diaminopimelic acid to the nucleotide precursor UDP-N-acetylmuramoyl-L-alanyl-D-glutamate (UMAG) in the biosynthesis of bacterial cell-wall peptidoglycan. The chain is UDP-N-acetylmuramoyl-L-alanyl-D-glutamate--2,6-diaminopimelate ligase from Bacteroides thetaiotaomicron (strain ATCC 29148 / DSM 2079 / JCM 5827 / CCUG 10774 / NCTC 10582 / VPI-5482 / E50).